The sequence spans 86 residues: Large ribosomal subunit protein bL27 (86 aa).

A disordered region spans residues 1–26 (MATKKAGGSSRNGRDSAGRRLGVKKS).

It belongs to the bacterial ribosomal protein bL27 family.

The sequence is that of Large ribosomal subunit protein bL27 from Rickettsia akari (strain Hartford).